The primary structure comprises 85 residues: UPF0291 protein SPCG_1462 (85 aa).

Residues 62–85 (TPEKLRQVQREKGLHGRSLDDPNS) form a disordered region.

It belongs to the UPF0291 family.

The protein resides in the cytoplasm. This is UPF0291 protein SPCG_1462 from Streptococcus pneumoniae (strain CGSP14).